We begin with the raw amino-acid sequence, 259 residues long: NAD kinase (259 aa).

Catalysis depends on aspartate 49, which acts as the Proton acceptor. Residues 49 to 50 (DG), arginine 54, 118 to 119 (NE), aspartate 148, alanine 156, 159 to 164 (TAYNYS), and alanine 183 contribute to the NAD(+) site.

Belongs to the NAD kinase family. A divalent metal cation is required as a cofactor.

The protein localises to the cytoplasm. It catalyses the reaction NAD(+) + ATP = ADP + NADP(+) + H(+). Functionally, involved in the regulation of the intracellular balance of NAD and NADP, and is a key enzyme in the biosynthesis of NADP. Catalyzes specifically the phosphorylation on 2'-hydroxyl of the adenosine moiety of NAD to yield NADP. The protein is NAD kinase of Xylella fastidiosa (strain Temecula1 / ATCC 700964).